The sequence spans 85 residues: Small ribosomal subunit protein bS18 (85 aa).

Belongs to the bacterial ribosomal protein bS18 family. In terms of assembly, part of the 30S ribosomal subunit. Forms a tight heterodimer with protein bS6.

In terms of biological role, binds as a heterodimer with protein bS6 to the central domain of the 16S rRNA, where it helps stabilize the platform of the 30S subunit. This Helicobacter acinonychis (strain Sheeba) protein is Small ribosomal subunit protein bS18.